Here is a 141-residue protein sequence, read N- to C-terminus: U1 small nuclear ribonucleoprotein C (141 aa).

The Matrin-type zinc finger occupies 4 to 36 (YYCEYCDKYLTHDSPSVRKSHTIGKVHQQAVTL). Positions 69–141 (LLPPNMVPGQ…SNSPPSNNDQ (73 aa)) are disordered. Pro residues predominate over residues 83-97 (MMPPGQFPFPPPPGQ). Low complexity-rich tracts occupy residues 100–110 (GGMPPHQQQPM) and 124–141 (QQSAQQFNSNSPPSNNDQ).

This sequence belongs to the U1 small nuclear ribonucleoprotein C family. Component of the U1 snRNP. The U1 snRNP is composed of the U1 snRNA and the 7 core Sm proteins SNRPB, SNRPD1, SNRPD2, SNRPD3, SNRPE, SNRPF and SNRPG that assemble in a heptameric protein ring on the Sm site of the small nuclear RNA to form the core snRNP, and at least 3 U1 snRNP-specific proteins SNRNP70/U1-70K, SNRPA/U1-A and SNRPC/U1-C. SNRPC/U1-C interacts with U1 snRNA and the 5' splice-site region of the pre-mRNA.

It localises to the nucleus. Functionally, component of the spliceosomal U1 snRNP, which is essential for recognition of the pre-mRNA 5' splice-site and the subsequent assembly of the spliceosome. SNRPC/U1-C is directly involved in initial 5' splice-site recognition for both constitutive and regulated alternative splicing. The interaction with the 5' splice-site seems to precede base-pairing between the pre-mRNA and the U1 snRNA. Stimulates commitment or early (E) complex formation by stabilizing the base pairing of the 5' end of the U1 snRNA and the 5' splice-site region. The sequence is that of U1 small nuclear ribonucleoprotein C from Heterostelium pallidum (strain ATCC 26659 / Pp 5 / PN500) (Cellular slime mold).